The chain runs to 426 residues: Serine--tRNA ligase (426 aa).

230 to 232 (TSE) lines the L-serine pocket. 261 to 263 (RSE) lines the ATP pocket. Glu-284 serves as a coordination point for L-serine. 348-351 (EISS) contributes to the ATP binding site. An L-serine-binding site is contributed by Ser-384.

The protein belongs to the class-II aminoacyl-tRNA synthetase family. Type-1 seryl-tRNA synthetase subfamily. Homodimer. The tRNA molecule binds across the dimer.

The protein localises to the cytoplasm. It catalyses the reaction tRNA(Ser) + L-serine + ATP = L-seryl-tRNA(Ser) + AMP + diphosphate + H(+). The catalysed reaction is tRNA(Sec) + L-serine + ATP = L-seryl-tRNA(Sec) + AMP + diphosphate + H(+). Its pathway is aminoacyl-tRNA biosynthesis; selenocysteinyl-tRNA(Sec) biosynthesis; L-seryl-tRNA(Sec) from L-serine and tRNA(Sec): step 1/1. Functionally, catalyzes the attachment of serine to tRNA(Ser). Is also able to aminoacylate tRNA(Sec) with serine, to form the misacylated tRNA L-seryl-tRNA(Sec), which will be further converted into selenocysteinyl-tRNA(Sec). The sequence is that of Serine--tRNA ligase from Sphingopyxis alaskensis (strain DSM 13593 / LMG 18877 / RB2256) (Sphingomonas alaskensis).